The following is a 452-amino-acid chain: Phosphoglucosamine mutase (452 aa).

Ser-104 functions as the Phosphoserine intermediate in the catalytic mechanism. Mg(2+)-binding residues include Ser-104, Asp-244, Asp-246, and Asp-248. Phosphoserine is present on Ser-104.

It belongs to the phosphohexose mutase family. The cofactor is Mg(2+). Activated by phosphorylation.

It catalyses the reaction alpha-D-glucosamine 1-phosphate = D-glucosamine 6-phosphate. Catalyzes the conversion of glucosamine-6-phosphate to glucosamine-1-phosphate. This Pediococcus pentosaceus (strain ATCC 25745 / CCUG 21536 / LMG 10740 / 183-1w) protein is Phosphoglucosamine mutase.